The following is a 542-amino-acid chain: Chaperonin GroEL 1 (542 aa).

ATP is bound by residues 29–32, 86–90, glycine 415, 479–481, and aspartate 495; these read TIGP, DGTTT, and NAA.

Belongs to the chaperonin (HSP60) family. Forms a cylinder of 14 subunits composed of two heptameric rings stacked back-to-back. Interacts with the co-chaperonin GroES.

Its subcellular location is the cytoplasm. It carries out the reaction ATP + H2O + a folded polypeptide = ADP + phosphate + an unfolded polypeptide.. In terms of biological role, together with its co-chaperonin GroES, plays an essential role in assisting protein folding. The GroEL-GroES system forms a nano-cage that allows encapsulation of the non-native substrate proteins and provides a physical environment optimized to promote and accelerate protein folding. The protein is Chaperonin GroEL 1 of Streptomyces avermitilis (strain ATCC 31267 / DSM 46492 / JCM 5070 / NBRC 14893 / NCIMB 12804 / NRRL 8165 / MA-4680).